A 31-amino-acid polypeptide reads, in one-letter code: Cyclotide Hyfl-A (31 aa).

The segment at residues 1-31 is a cross-link (cyclopeptide (Ser-Asn)); sequence SISCGESCVYIPCTVTALVGCTCKDKVCYLN. Intrachain disulfides connect cysteine 4/cysteine 21, cysteine 8/cysteine 23, and cysteine 13/cysteine 28.

It belongs to the cyclotide family. Bracelet subfamily. In terms of processing, this is a cyclic peptide.

In terms of biological role, probably participates in a plant defense mechanism. In Hybanthus floribundus (Greenviolet), this protein is Cyclotide Hyfl-A.